The primary structure comprises 133 residues: UPF0768 protein C977.18 (133 aa).

It belongs to the UPF0768 family.

The chain is UPF0768 protein C977.18 from Schizosaccharomyces pombe (strain 972 / ATCC 24843) (Fission yeast).